A 164-amino-acid chain; its full sequence is NADH-quinone oxidoreductase subunit I 2 (164 aa).

4Fe-4S ferredoxin-type domains are found at residues Ile39 to Ala71 and Glu81 to Asp110. Residues Cys51, Cys54, Cys57, Cys61, Cys90, Cys93, Cys96, and Cys100 each coordinate [4Fe-4S] cluster.

The protein belongs to the complex I 23 kDa subunit family. In terms of assembly, NDH-1 is composed of 14 different subunits. Subunits NuoA, H, J, K, L, M, N constitute the membrane sector of the complex. [4Fe-4S] cluster is required as a cofactor.

It localises to the cell inner membrane. It carries out the reaction a quinone + NADH + 5 H(+)(in) = a quinol + NAD(+) + 4 H(+)(out). In terms of biological role, NDH-1 shuttles electrons from NADH, via FMN and iron-sulfur (Fe-S) centers, to quinones in the respiratory chain. The immediate electron acceptor for the enzyme in this species is believed to be ubiquinone. Couples the redox reaction to proton translocation (for every two electrons transferred, four hydrogen ions are translocated across the cytoplasmic membrane), and thus conserves the redox energy in a proton gradient. In Cereibacter sphaeroides (strain ATCC 17023 / DSM 158 / JCM 6121 / CCUG 31486 / LMG 2827 / NBRC 12203 / NCIMB 8253 / ATH 2.4.1.) (Rhodobacter sphaeroides), this protein is NADH-quinone oxidoreductase subunit I 2.